The chain runs to 339 residues: Serpentine receptor class r-10 (339 aa).

Residues 1-11 (MSGELWITLVD) lie on the Extracellular side of the membrane. The helical transmembrane segment at 12–32 (TADIVGVTLTFCVNIVLLGLL) threads the bilayer. The Cytoplasmic segment spans residues 33–42 (KTRGKNLGTY). Residues 43 to 63 (KYLMAFFSVFSIFYAIIEFIL) traverse the membrane as a helical segment. Topologically, residues 64-92 (RPIMHIENTTFFLISRKRFNYSTKLGKIN) are extracellular. Residues asparagine 71 and asparagine 83 are each glycosylated (N-linked (GlcNAc...) asparagine). A helical transmembrane segment spans residues 93 to 113 (SAFYCACFATSFVVSGVHFVY). Residues 114-131 (RYFATCKPNLLRLFNLPT) lie on the Cytoplasmic side of the membrane. A helical transmembrane segment spans residues 132–152 (LLLWPLGCSVPVTMWASVSYF). Residues 153–201 (LYPDTEYTEAAVTNVLNNHYNWIKKENVSYIAYVYYQYENGVRHIYLKN) lie on the Extracellular side of the membrane. Asparagine 179 carries N-linked (GlcNAc...) asparagine glycosylation. A helical membrane pass occupies residues 202 to 222 (LLGCFVHYFVMSMTFVVMFYC). Over 223–254 (GYATWKTMNEHKDVSDRTRALQKQLFKALVLQ) the chain is Cytoplasmic. A helical membrane pass occupies residues 255 to 275 (TLIPTIFMYAPTGVMFIAPFF). Topologically, residues 276 to 284 (DVNLNANAN) are extracellular. The helical transmembrane segment at 285 to 305 (FIVFCSFLYPGLDPLILILII) threads the bilayer. At 306–339 (RDFRRTIFNFLCGKKNSVDESRSTTRANLSQVPT) the chain is on the cytoplasmic side.

The protein belongs to the nematode receptor-like protein str family. Interacts with odr-4. In terms of tissue distribution, strongly expressed in the sensory cilia of AWA olfactory neurons, and at low levels in the CEP neurons.

The protein resides in the cell projection. The protein localises to the cilium membrane. In terms of biological role, an odorant receptor which affects chemotaxis to the volatile odorant diacetyl. Specifies AWA neuronal cell fate via the odr-7 pathway. This Caenorhabditis elegans protein is Serpentine receptor class r-10.